The chain runs to 269 residues: Exodeoxyribonuclease WalJ (269 aa).

A divalent metal cation contacts are provided by His61, His63, Asp65, His66, and Asp150.

This sequence belongs to the metallo-beta-lactamase superfamily. The cofactor is Fe(2+). Requires Zn(2+) as cofactor. Mn(2+) is required as a cofactor.

The protein resides in the cell membrane. Its function is as follows. 5'-&gt;3' double-stranded DNA exonuclease. May be involved in the WalK/WalR signal transduction pathway. Required for accurate coordination of cell division with DNA replication. May play a role in cell wall metabolism. This is Exodeoxyribonuclease WalJ from Streptococcus pneumoniae serotype 2 (strain D39 / NCTC 7466).